The sequence spans 164 residues: Dehydrin Rab16C (164 aa).

Residues Met42–Gly51 show a composition bias toward gly residues. The interval Met42 to His164 is disordered. A compositionally biased stretch (low complexity) spans Gly105–Gly115. Residues Gly128–Val138 show a composition bias toward gly residues. Residues Gly147 to His164 are compositionally biased toward basic and acidic residues.

Belongs to the plant dehydrin family.

The protein is Dehydrin Rab16C (RAB16C) of Oryza sativa subsp. japonica (Rice).